The chain runs to 203 residues: Probable chemoreceptor glutamine deamidase CheD (203 aa).

The protein belongs to the CheD family.

The catalysed reaction is L-glutaminyl-[protein] + H2O = L-glutamyl-[protein] + NH4(+). Probably deamidates glutamine residues to glutamate on methyl-accepting chemotaxis receptors (MCPs), playing an important role in chemotaxis. This is Probable chemoreceptor glutamine deamidase CheD from Methylobacillus flagellatus (strain ATCC 51484 / DSM 6875 / VKM B-1610 / KT).